Here is a 171-residue protein sequence, read N- to C-terminus: Flavodoxin (171 aa).

One can recognise a Flavodoxin-like domain in the interval 4–166; that stretch reads IGLFVGTTTG…RIKEWVKQLK (163 aa).

It belongs to the flavodoxin family. FMN serves as cofactor.

In terms of biological role, low-potential electron donor to a number of redox enzymes. This Trichodesmium erythraeum (strain IMS101) protein is Flavodoxin (fld).